The chain runs to 260 residues: Cytochrome c oxidase subunit 2 (260 aa).

Residues Met-1 to His-39 lie on the Mitochondrial intermembrane side of the membrane. Residues Asp-40–Trp-61 traverse the membrane as a helical segment. The Mitochondrial matrix portion of the chain corresponds to His-62–His-76. A helical transmembrane segment spans residues Gly-77 to Tyr-104. Residues Ser-105–Ala-260 are Mitochondrial intermembrane-facing. Cu cation contacts are provided by His-186, Cys-221, Glu-223, Cys-225, and His-229. Position 223 (Glu-223) interacts with Mg(2+).

Belongs to the cytochrome c oxidase subunit 2 family. Component of the cytochrome c oxidase (complex IV, CIV), a multisubunit enzyme composed of a catalytic core of 3 subunits and several supernumerary subunits. The complex exists as a monomer or a dimer and forms supercomplexes (SCs) in the inner mitochondrial membrane with ubiquinol-cytochrome c oxidoreductase (cytochrome b-c1 complex, complex III, CIII). The cofactor is Cu cation.

It localises to the mitochondrion inner membrane. It catalyses the reaction 4 Fe(II)-[cytochrome c] + O2 + 8 H(+)(in) = 4 Fe(III)-[cytochrome c] + 2 H2O + 4 H(+)(out). Component of the cytochrome c oxidase, the last enzyme in the mitochondrial electron transport chain which drives oxidative phosphorylation. The respiratory chain contains 3 multisubunit complexes succinate dehydrogenase (complex II, CII), ubiquinol-cytochrome c oxidoreductase (cytochrome b-c1 complex, complex III, CIII) and cytochrome c oxidase (complex IV, CIV), that cooperate to transfer electrons derived from NADH and succinate to molecular oxygen, creating an electrochemical gradient over the inner membrane that drives transmembrane transport and the ATP synthase. Cytochrome c oxidase is the component of the respiratory chain that catalyzes the reduction of oxygen to water. Electrons originating from reduced cytochrome c in the intermembrane space (IMS) are transferred via the dinuclear copper A center (CU(A)) of subunit 2 and heme A of subunit 1 to the active site in subunit 1, a binuclear center (BNC) formed by heme A3 and copper B (CU(B)). The BNC reduces molecular oxygen to 2 water molecules using 4 electrons from cytochrome c in the IMS and 4 protons from the mitochondrial matrix. The chain is Cytochrome c oxidase subunit 2 (COX2) from Glycine max (Soybean).